A 311-amino-acid polypeptide reads, in one-letter code: Heme A synthase (311 aa).

Residues 1–6 lie on the Cytoplasmic side of the membrane; that stretch reads MQRFIK. Residues 7–27 traverse the membrane as a helical segment; it reads WLAVITSLDLLIVLLGGALVT. Residues 28–62 lie on the Extracellular side of the membrane; sequence KTGSGQGCGKSWPLCNGEFVPSNLSMETIIELSHR. The cysteines at positions 35 and 42 are disulfide-linked. The active site involves E58. H61 serves as a coordination point for heme o. The helical transmembrane segment at 63 to 83 threads the bilayer; it reads LTSGSAGILVTLLCILSWKYY. At 84–91 the chain is on the cytoplasmic side; that stretch reads KHVRETKT. A helical membrane pass occupies residues 92–112; that stretch reads LAILSFVFLVAQALMGAAAVV. At 113-121 the chain is on the extracellular side; sequence WGQMPAVLA. The helical transmembrane segment at 122–142 threads the bilayer; that stretch reads IHFGISLISFASVILLTCLIF. H123 contacts heme o. Residues 143-159 lie on the Cytoplasmic side of the membrane; the sequence is EIDQKFDARSLIMDKKM. A helical transmembrane segment spans residues 160-180; it reads KFHIYGVTIYSYIVVYTGALV. Residues 181–211 lie on the Extracellular side of the membrane; that stretch reads RHERASLACPDFPLCSKNRPMPTQLHEWVQM. Cysteines 189 and 195 form a disulfide. Residues 212–232 traverse the membrane as a helical segment; sequence GHRVAAMLIFAWILYAMILAI. H213 is a binding site for heme b. Over 233–243 the chain is Cytoplasmic; it reads RHYKQQPVVYW. A helical transmembrane segment spans residues 244–264; that stretch reads GWIISFILVTLQAIVGILVVF. The Extracellular portion of the chain corresponds to 265–271; the sequence is TNASLSM. A helical membrane pass occupies residues 272–292; that stretch reads ALLHSLFISCLFAVLCYLVML. Residue H275 participates in heme b binding. At 293–311 the chain is on the cytoplasmic side; sequence GTRSKVNAKEAASISKQTK.

Belongs to the COX15/CtaA family. Type 1 subfamily. In terms of assembly, interacts with CtaB. Heme b serves as cofactor.

The protein localises to the cell membrane. The catalysed reaction is Fe(II)-heme o + 2 A + H2O = Fe(II)-heme a + 2 AH2. Its pathway is porphyrin-containing compound metabolism; heme A biosynthesis; heme A from heme O: step 1/1. Catalyzes the conversion of heme O to heme A by two successive hydroxylations of the methyl group at C8. The first hydroxylation forms heme I, the second hydroxylation results in an unstable dihydroxymethyl group, which spontaneously dehydrates, resulting in the formyl group of heme A. This is Heme A synthase from Bacillus cereus (strain AH187).